The sequence spans 234 residues: Thymidylate kinase (234 aa).

Residue 11 to 18 (GLEGSGKT) participates in ATP binding.

Belongs to the thymidylate kinase family.

It carries out the reaction dTMP + ATP = dTDP + ADP. Phosphorylation of dTMP to form dTDP in both de novo and salvage pathways of dTTP synthesis. The polypeptide is Thymidylate kinase (Wigglesworthia glossinidia brevipalpis).